The chain runs to 505 residues: Maturase K (505 aa).

It belongs to the intron maturase 2 family. MatK subfamily.

Its subcellular location is the plastid. The protein localises to the chloroplast. In terms of biological role, usually encoded in the trnK tRNA gene intron. Probably assists in splicing its own and other chloroplast group II introns. This is Maturase K from Elaeagnus umbellata (Autumn olive).